A 903-amino-acid polypeptide reads, in one-letter code: Cell division cycle protein 48 homolog MJ1156 (903 aa).

ATP is bound by residues 220 to 227 and 493 to 500; these read GPPGTGKT.

Belongs to the AAA ATPase family. CDC48 subfamily.

This is Cell division cycle protein 48 homolog MJ1156 from Methanocaldococcus jannaschii (strain ATCC 43067 / DSM 2661 / JAL-1 / JCM 10045 / NBRC 100440) (Methanococcus jannaschii).